The following is a 179-amino-acid chain: Large ribosomal subunit protein uL5 (179 aa).

This sequence belongs to the universal ribosomal protein uL5 family. Part of the 50S ribosomal subunit; part of the 5S rRNA/L5/L18/L25 subcomplex. Contacts the 5S rRNA and the P site tRNA. Forms a bridge to the 30S subunit in the 70S ribosome.

Its function is as follows. This is one of the proteins that bind and probably mediate the attachment of the 5S RNA into the large ribosomal subunit, where it forms part of the central protuberance. In the 70S ribosome it contacts protein S13 of the 30S subunit (bridge B1b), connecting the 2 subunits; this bridge is implicated in subunit movement. Contacts the P site tRNA; the 5S rRNA and some of its associated proteins might help stabilize positioning of ribosome-bound tRNAs. The polypeptide is Large ribosomal subunit protein uL5 (Serratia proteamaculans (strain 568)).